A 261-amino-acid polypeptide reads, in one-letter code: UPF0246 protein azo1887 (261 aa).

This sequence belongs to the UPF0246 family.

In Azoarcus sp. (strain BH72), this protein is UPF0246 protein azo1887.